We begin with the raw amino-acid sequence, 439 residues long: Glutamate--tRNA ligase 2 (439 aa).

A 'HIGH' region motif is present at residues 6-16 (PSPTGDMHIGN). The short motif at 232–236 (KMSKR) is the 'KMSKS' region element. Lys235 serves as a coordination point for ATP.

It belongs to the class-I aminoacyl-tRNA synthetase family. Glutamate--tRNA ligase type 1 subfamily. As to quaternary structure, monomer.

The protein resides in the cytoplasm. It catalyses the reaction tRNA(Glu) + L-glutamate + ATP = L-glutamyl-tRNA(Glu) + AMP + diphosphate. Functionally, catalyzes the attachment of glutamate to tRNA(Glu) in a two-step reaction: glutamate is first activated by ATP to form Glu-AMP and then transferred to the acceptor end of tRNA(Glu). The polypeptide is Glutamate--tRNA ligase 2 (Helicobacter pylori (strain Shi470)).